Consider the following 335-residue polypeptide: Ketol-acid reductoisomerase (NADP(+)) (335 aa).

The KARI N-terminal Rossmann domain maps to 5–185; it reads SKIYTDKDSN…GATRAGVIPT (181 aa). Residues 28–31, serine 56, and 86–89 each bind NADP(+); these read YGSQ and DMVQ. Histidine 111 is a catalytic residue. Glycine 137 is an NADP(+) binding site. The region spanning 186–331 is the KARI C-terminal knotted domain; it reads TFKEETETDL…NQLKDLIQKG (146 aa). Residues aspartate 194, glutamate 198, glutamate 230, and glutamate 234 each contribute to the Mg(2+) site. Serine 255 contributes to the substrate binding site.

This sequence belongs to the ketol-acid reductoisomerase family. Mg(2+) serves as cofactor.

The catalysed reaction is (2R)-2,3-dihydroxy-3-methylbutanoate + NADP(+) = (2S)-2-acetolactate + NADPH + H(+). It carries out the reaction (2R,3R)-2,3-dihydroxy-3-methylpentanoate + NADP(+) = (S)-2-ethyl-2-hydroxy-3-oxobutanoate + NADPH + H(+). The protein operates within amino-acid biosynthesis; L-isoleucine biosynthesis; L-isoleucine from 2-oxobutanoate: step 2/4. Its pathway is amino-acid biosynthesis; L-valine biosynthesis; L-valine from pyruvate: step 2/4. Its function is as follows. Involved in the biosynthesis of branched-chain amino acids (BCAA). Catalyzes an alkyl-migration followed by a ketol-acid reduction of (S)-2-acetolactate (S2AL) to yield (R)-2,3-dihydroxy-isovalerate. In the isomerase reaction, S2AL is rearranged via a Mg-dependent methyl migration to produce 3-hydroxy-3-methyl-2-ketobutyrate (HMKB). In the reductase reaction, this 2-ketoacid undergoes a metal-dependent reduction by NADPH to yield (R)-2,3-dihydroxy-isovalerate. The sequence is that of Ketol-acid reductoisomerase (NADP(+)) from Saccharolobus islandicus (strain L.S.2.15 / Lassen #1) (Sulfolobus islandicus).